The following is a 217-amino-acid chain: Variable small protein 22 (217 aa).

The signal sequence occupies residues 1 to 18 (MRKRISAIIMTLFMVFMS). Cys-19 carries N-palmitoyl cysteine lipidation. Residue Cys-19 is the site of S-diacylglycerol cysteine attachment. Residues 151–174 (LGKNDASDDDTKKAIKKDNSDKTK) are disordered. Positions 155-174 (DASDDDTKKAIKKDNSDKTK) are enriched in basic and acidic residues.

This sequence belongs to the variable small protein (Vsp) family.

The protein localises to the cell outer membrane. In terms of biological role, the Vlp and Vsp proteins are antigenically distinct proteins, only one vlp or vsp gene is transcriptionally active at any one time. Switching between these genes is a mechanism of host immune response evasion. The polypeptide is Variable small protein 22 (Borrelia hermsii).